The primary structure comprises 379 residues: Armadillo repeat-containing X-linked protein 3 (379 aa).

Residues 1–6 (MGYARK) are Mitochondrial intermembrane-facing. 2 mitochondrion outer membrane (MOM)-targeting sequence regions span residues 1 to 6 (MGYARK) and 26 to 37 (RLTRGRKQNKEK). The helical; Signal-anchor transmembrane segment at 7–29 (VGWVTAGLVIGAGACYCIYRLTR) threads the bilayer. The Cytoplasmic segment spans residues 30-379 (GRKQNKEKMA…TERMFPKSQE (350 aa)). Phosphoserine is present on residues Ser61, Ser67, and Ser72. Residues 89–98 (RARARARARA) form a nuclear localization signal region. A compositionally biased stretch (basic residues) spans 95–106 (RARATRARRAVQ). Residues 95–116 (RARATRARRAVQKRASPNSDDT) form a disordered region. Residue Ser110 is modified to Phosphoserine. ARM repeat units lie at residues 111-151 (PNSD…NNAA), 153-192 (AFNR…NLSV), and 233-272 (VTNE…NLAE).

It belongs to the eutherian X-chromosome-specific Armcx family. In terms of assembly, interacts (via ARM domain) with MIRO1, MIRO2 and TRAK2. The interaction with Miro is calcium-dependent. Interacts with Sox10. Highly expressed in the developing neural tissues, neural crest derivatives and hind limbs. Also widely expressed in the adult nervous tissue, especially in the forebrain, including the cerebral cortex, hippocampus and thalamus.

The protein localises to the mitochondrion outer membrane. It is found in the cytoplasm. The protein resides in the nucleus. Its function is as follows. Regulates mitochondrial aggregation and transport in axons in living neurons. May link mitochondria to the Trak2-kinesin motor complex via its interaction with Miro and Trak2. Mitochondrial distribution and dynamics is regulated through Armcx3 protein degradation, which is promoted by PCK and negatively regulated by Wnt1. Enhances the Sox10-mediated transactivation of the neuronal acetylcholine receptor subunit alpha-3 and beta-4 subunit gene promoters. This is Armadillo repeat-containing X-linked protein 3 (Armcx3) from Mus musculus (Mouse).